The primary structure comprises 420 residues: ATP phosphoribosyltransferase regulatory subunit (420 aa).

It belongs to the class-II aminoacyl-tRNA synthetase family. HisZ subfamily. As to quaternary structure, heteromultimer composed of HisG and HisZ subunits.

Its subcellular location is the cytoplasm. It functions in the pathway amino-acid biosynthesis; L-histidine biosynthesis; L-histidine from 5-phospho-alpha-D-ribose 1-diphosphate: step 1/9. Its function is as follows. Required for the first step of histidine biosynthesis. May allow the feedback regulation of ATP phosphoribosyltransferase activity by histidine. This chain is ATP phosphoribosyltransferase regulatory subunit, found in Bacillus thuringiensis subsp. konkukian (strain 97-27).